Consider the following 201-residue polypeptide: Large ribosomal subunit protein uL4 (201 aa).

Residues 46–71 (QKTRAEVVGSGKKPWRQKGTGRARAG) form a disordered region.

The protein belongs to the universal ribosomal protein uL4 family. In terms of assembly, part of the 50S ribosomal subunit.

One of the primary rRNA binding proteins, this protein initially binds near the 5'-end of the 23S rRNA. It is important during the early stages of 50S assembly. It makes multiple contacts with different domains of the 23S rRNA in the assembled 50S subunit and ribosome. Functionally, forms part of the polypeptide exit tunnel. The chain is Large ribosomal subunit protein uL4 from Shewanella piezotolerans (strain WP3 / JCM 13877).